The following is a 381-amino-acid chain: Succinyl-diaminopimelate desuccinylase (381 aa).

Position 69 (histidine 69) interacts with Zn(2+). Residue aspartate 71 is part of the active site. Zn(2+) is bound at residue aspartate 103. Glutamate 137 (proton acceptor) is an active-site residue. Positions 138, 166, and 355 each coordinate Zn(2+).

Belongs to the peptidase M20A family. DapE subfamily. As to quaternary structure, homodimer. The cofactor is Zn(2+). Co(2+) serves as cofactor.

The enzyme catalyses N-succinyl-(2S,6S)-2,6-diaminopimelate + H2O = (2S,6S)-2,6-diaminopimelate + succinate. It functions in the pathway amino-acid biosynthesis; L-lysine biosynthesis via DAP pathway; LL-2,6-diaminopimelate from (S)-tetrahydrodipicolinate (succinylase route): step 3/3. In terms of biological role, catalyzes the hydrolysis of N-succinyl-L,L-diaminopimelic acid (SDAP), forming succinate and LL-2,6-diaminopimelate (DAP), an intermediate involved in the bacterial biosynthesis of lysine and meso-diaminopimelic acid, an essential component of bacterial cell walls. The chain is Succinyl-diaminopimelate desuccinylase from Rickettsia akari (strain Hartford).